Reading from the N-terminus, the 398-residue chain is Phosphoglycerate kinase (398 aa).

Substrate contacts are provided by residues 20-22, arginine 35, 58-61, arginine 118, and arginine 155; these read DFN and HLGK. ATP contacts are provided by residues lysine 208, glycine 296, glutamate 327, and 354–357; that span reads GGDS.

Belongs to the phosphoglycerate kinase family. Monomer.

The protein resides in the cytoplasm. The enzyme catalyses (2R)-3-phosphoglycerate + ATP = (2R)-3-phospho-glyceroyl phosphate + ADP. Its pathway is carbohydrate degradation; glycolysis; pyruvate from D-glyceraldehyde 3-phosphate: step 2/5. The protein is Phosphoglycerate kinase of Fusobacterium nucleatum subsp. nucleatum (strain ATCC 25586 / DSM 15643 / BCRC 10681 / CIP 101130 / JCM 8532 / KCTC 2640 / LMG 13131 / VPI 4355).